The primary structure comprises 617 residues: Zinc finger protein 613 (617 aa).

Residues 8 to 78 (LTLEDVAVEF…ENEIHSQICP (71 aa)) form the KRAB domain. 12 consecutive C2H2-type zinc fingers follow at residues 204–226 (HVCT…QRVH), 232–254 (HGCS…QRNH), 260–282 (YECT…QKIH), 288–310 (YICS…QRVH), 316–338 (HGCS…QRTH), 344–366 (YECT…QKAH), 372–394 (YICR…QRIH), 400–422 (YICN…RRTH), 428–450 (YVCN…QRFH), 456–478 (FVCT…QRIH), 484–506 (YTCS…RRTH), and 512–535 (YGCS…GMLH).

Belongs to the krueppel C2H2-type zinc-finger protein family.

The protein localises to the nucleus. Functionally, may be involved in transcriptional regulation. The protein is Zinc finger protein 613 (ZNF613) of Homo sapiens (Human).